A 380-amino-acid polypeptide reads, in one-letter code: Protein Wnt-5a (380 aa).

Positions 1–37 are cleaved as a signal peptide; it reads MKKPIGILSPGVALGTAGGAMSSKFFLMALATFFSFA. Residues 38–61 constitute a propeptide that is removed on maturation; the sequence is QVVIEANSWWSLGMNNPVQMSEVY. Cys104 and Cys115 are disulfide-bonded. 2 N-linked (GlcNAc...) asparagine glycosylation sites follow: Asn114 and Asn120. 10 disulfides stabilise this stretch: Cys154–Cys162, Cys164–Cys182, Cys238–Cys252, Cys240–Cys247, Cys309–Cys340, Cys325–Cys335, Cys339–Cys379, Cys355–Cys370, Cys357–Cys367, and Cys362–Cys363. Ser244 is lipidated: O-palmitoleoyl serine; by PORCN. N-linked (GlcNAc...) asparagine glycosylation is found at Asn312 and Asn326.

Belongs to the Wnt family. As to quaternary structure, forms a soluble 1:1 complex with AFM; this prevents oligomerization and is required for prolonged biological activity. The complex with AFM may represent the physiological form in body fluids. Homooligomer; disulfide-linked, leading to inactivation. Interacts with PORCN. Interacts with WLS. Interacts with glypican GCP3. Interacts with PKD1 (via extracellular domain). Interacts with TMEM67. Glycosylation is necessary for secretion but not for activity. In terms of processing, palmitoleoylation is required for efficient binding to frizzled receptors. Depalmitoleoylation leads to Wnt signaling pathway inhibition. Post-translationally, proteolytic processing by TIKI1 and TIKI2 promotes oxidation and formation of large disulfide-bond oligomers, leading to inactivation of WNT5A. In terms of tissue distribution, expressed in a gradient at the caudal end of the embryo during gastrulation and later in the distal-most aspect of several structures that extend from the body such as the limbs and genital tubercle.

It is found in the secreted. The protein resides in the extracellular space. It localises to the extracellular matrix. Functionally, ligand for members of the frizzled family of seven transmembrane receptors. Can activate or inhibit canonical Wnt signaling, depending on receptor context. In the presence of FZD4, activates beta-catenin signaling. In the presence of ROR2, inhibits the canonical Wnt pathway by promoting beta-catenin degradation through a GSK3-independent pathway which involves down-regulation of beta-catenin-induced reporter gene expression. Suppression of the canonical pathway allows chondrogenesis to occur and inhibits tumor formation. Stimulates cell migration. Decreases proliferation, migration, invasiveness and clonogenicity of carcinoma cells and may act as a tumor suppressor. Mediates motility of melanoma cells. Required during embryogenesis for extension of the primary anterior-posterior axis and for outgrowth of limbs and the genital tubercle. Inhibits type II collagen expression in chondrocytes. This is Protein Wnt-5a (Wnt5a) from Mus musculus (Mouse).